Here is a 201-residue protein sequence, read N- to C-terminus: Holliday junction branch migration complex subunit RuvA (201 aa).

Residues 1-64 (MIGRLRGTLA…EDAQLLYGFA (64 aa)) form a domain I region. The interval 65–143 (EKRERELFRE…AWESMPAIAT (79 aa)) is domain II. Residues 144 to 152 (LVVEPGSKT) are flexible linker. A domain III region spans residues 153–201 (AVTSAENDAVSALISLGFKPQEASRAVSAIQEENLSSEEMIRRALKGMV).

Belongs to the RuvA family. As to quaternary structure, homotetramer. Forms an RuvA(8)-RuvB(12)-Holliday junction (HJ) complex. HJ DNA is sandwiched between 2 RuvA tetramers; dsDNA enters through RuvA and exits via RuvB. An RuvB hexamer assembles on each DNA strand where it exits the tetramer. Each RuvB hexamer is contacted by two RuvA subunits (via domain III) on 2 adjacent RuvB subunits; this complex drives branch migration. In the full resolvosome a probable DNA-RuvA(4)-RuvB(12)-RuvC(2) complex forms which resolves the HJ.

The protein resides in the cytoplasm. In terms of biological role, the RuvA-RuvB-RuvC complex processes Holliday junction (HJ) DNA during genetic recombination and DNA repair, while the RuvA-RuvB complex plays an important role in the rescue of blocked DNA replication forks via replication fork reversal (RFR). RuvA specifically binds to HJ cruciform DNA, conferring on it an open structure. The RuvB hexamer acts as an ATP-dependent pump, pulling dsDNA into and through the RuvAB complex. HJ branch migration allows RuvC to scan DNA until it finds its consensus sequence, where it cleaves and resolves the cruciform DNA. In Stutzerimonas stutzeri (strain A1501) (Pseudomonas stutzeri), this protein is Holliday junction branch migration complex subunit RuvA.